The primary structure comprises 207 residues: Fibroblast growth factor 18 (207 aa).

The signal sequence occupies residues 1-27; it reads MYSAPSTCTCLCLHFLLLCFQVQVLAA. Asn39 carries N-linked (GlcNAc...) asparagine glycosylation. Cys109 and Cys127 are oxidised to a cystine. The N-linked (GlcNAc...) asparagine glycan is linked to Asn137.

Belongs to the heparin-binding growth factors family. As to quaternary structure, interacts with FGFR3 and FGFR4.

The protein localises to the secreted. Functionally, plays an important role in the regulation of cell proliferation, cell differentiation and cell migration. Required for normal ossification and bone development. Stimulates hepatic and intestinal proliferation. This is Fibroblast growth factor 18 (FGF18) from Bos taurus (Bovine).